Reading from the N-terminus, the 730-residue chain is Denticleless protein homolog (730 aa).

Met-1 is modified (N-acetylmethionine). 3 WD repeats span residues 47–89 (GVPV…FRKK), 96–135 (AHWNAVFDLAWVPGELKLVTAAGDQTAKFWDVKAGELIGT), and 138–178 (GHQC…KDGF). A DDB1-binding motif motif is present at residues 168-171 (WDTR). The span at 188 to 198 (AHNTSDKQTPS) shows a compositional bias: polar residues. Residues 188–210 (AHNTSDKQTPSKPKKKQNSKGLA) are disordered. Thr-196 carries the post-translational modification Phosphothreonine. A Nuclear localization signal motif is present at residues 197–203 (PSKPKKK). WD repeat units lie at residues 214–253 (DFQQSVTVVLFQDENTLVSAGAVDGIIKVWDLRKNYTAYR), 267–308 (SSTR…TSPV), 313–354 (GHQN…QPPT), and 358–398 (GHSQ…EEKP). The DDB1-binding motif signature appears at 243–246 (WDLR). Residues 399-443 (GGDKLSTVGWASQKKKESRPGLVTVTSSQSTPAKAPRAKCNPSNS) are disordered. A phosphoserine mark is found at Ser-410 and Ser-426. Thr-464 is subject to Phosphothreonine; by CDK1 and CDK2. The interval 465–498 (PTFSIKTSPAKARSPINRRGSVSSVSPKPPSSFK) is disordered. Phosphoserine is present on residues Ser-485, Ser-490, Ser-495, and Ser-512. A Phosphothreonine modification is found at Thr-516. Residue Ser-557 is modified to Phosphoserine. 2 disordered regions span residues 599 to 631 (SKDSLGPTKSSKIEGAGTSISEPPSPISPYASE) and 644 to 703 (GEGS…TITP). A phosphoserine mark is found at Ser-676 and Ser-679. The span at 679–689 (SPSSQTPNSRR) shows a compositional bias: polar residues. 2 positions are modified to phosphothreonine: Thr-684 and Thr-702. Ser-717 carries the post-translational modification Phosphoserine.

This sequence belongs to the WD repeat cdt2 family. As to quaternary structure, component of the DCX(DTL) E3 ubiquitin ligase complex (also called CRL4(CDT2)), at least composed of CUL4 (CUL4A or CUL4B), DDB1, DTL/CDT2 and RBX1. Interacts with CDKN1A. Interacts with DDB1. Interacts with FBXO11; SCF(FBXWO11) controls DTL stability but DCX(DTL) does not control FBXO11 stability. Interacts with CRY1. Post-translationally, ubiquitinated by the anaphase promoting complex/cyclosome (APC/C). Autoubiquitinated through 'Lys-48'-polyubiquitin chains in a PCNA-independent reaction, allowing proteasomal turnover. Polyubiquitinated by SCF(FBXO11) when not phosphorylated, leading to its degradation. A tight regulation of the polyubiquitination by SCF(FBXO11) is involved in the control of different processes such as TGF-beta signaling, cell cycle progression and exit. In terms of processing, phosphorylated at Thr-464 by CDK1/Cyclin-B and CDK2/Cyclin-A but not by CDK2/Cyclin-E, MAPK1 or PLK1. Phosphorylation at Thr-464 inhibits the interaction with FBXO11 and decreases upon cell cycle exit induced by TGF-beta or serum starvation. Expressed in placenta and testis, very low expression seen in skeletal muscle. Detected in all hematopoietic tissues examined, with highest expression in thymus and bone marrow. A low level detected in the spleen and lymph node, and barely detectable level in the peripheral leukocytes. RA treatment down-regulated the expression in NT2 cell.

The protein localises to the nucleus. It localises to the nucleus membrane. The protein resides in the cytoplasm. It is found in the cytoskeleton. Its subcellular location is the microtubule organizing center. The protein localises to the centrosome. It localises to the chromosome. It participates in protein modification; protein ubiquitination. Its function is as follows. Substrate-specific adapter of a DCX (DDB1-CUL4-X-box) E3 ubiquitin-protein ligase complex required for cell cycle control, DNA damage response and translesion DNA synthesis. The DCX(DTL) complex, also named CRL4(CDT2) complex, mediates the polyubiquitination and subsequent degradation of CDT1, CDKN1A/p21(CIP1), FBH1, KMT5A and SDE2. CDT1 degradation in response to DNA damage is necessary to ensure proper cell cycle regulation of DNA replication. CDKN1A/p21(CIP1) degradation during S phase or following UV irradiation is essential to control replication licensing. KMT5A degradation is also important for a proper regulation of mechanisms such as TGF-beta signaling, cell cycle progression, DNA repair and cell migration. Most substrates require their interaction with PCNA for their polyubiquitination: substrates interact with PCNA via their PIP-box, and those containing the 'K+4' motif in the PIP box, recruit the DCX(DTL) complex, leading to their degradation. In undamaged proliferating cells, the DCX(DTL) complex also promotes the 'Lys-164' monoubiquitination of PCNA, thereby being involved in PCNA-dependent translesion DNA synthesis. The DDB1-CUL4A-DTL E3 ligase complex regulates the circadian clock function by mediating the ubiquitination and degradation of CRY1. The protein is Denticleless protein homolog (DTL) of Homo sapiens (Human).